The primary structure comprises 51 residues: Insulin (51 aa).

3 disulfides stabilise this stretch: Cys7-Cys37, Cys19-Cys50, and Cys36-Cys41.

This sequence belongs to the insulin family. Heterodimer of a B chain and an A chain linked by two disulfide bonds.

Its subcellular location is the secreted. Its function is as follows. Insulin decreases blood glucose concentration. It increases cell permeability to monosaccharides, amino acids and fatty acids. It accelerates glycolysis, the pentose phosphate cycle, and glycogen synthesis in liver. The protein is Insulin (INS) of Alligator mississippiensis (American alligator).